A 413-amino-acid polypeptide reads, in one-letter code: N-acylneuraminate cytidylyltransferase (413 aa).

It belongs to the CMP-NeuNAc synthase family. It depends on Mg(2+) as a cofactor. Mn(2+) is required as a cofactor.

The protein resides in the cytoplasm. The catalysed reaction is an N-acylneuraminate + CTP = a CMP-N-acyl-beta-neuraminate + diphosphate. In terms of biological role, catalyzes the formation of CMP-N-acetylneuraminic acid (CMP-NeuNAc), which is essential for the formation of the capsule. In Streptococcus agalactiae serotype V (strain ATCC BAA-611 / 2603 V/R), this protein is N-acylneuraminate cytidylyltransferase (neuA).